We begin with the raw amino-acid sequence, 296 residues long: Nucleotide-binding protein SMU_1306c (296 aa).

13 to 20 (GMSGAGKT) contacts ATP. 63–66 (DMRS) serves as a coordination point for GTP.

This sequence belongs to the RapZ-like family.

Its function is as follows. Displays ATPase and GTPase activities. The polypeptide is Nucleotide-binding protein SMU_1306c (Streptococcus mutans serotype c (strain ATCC 700610 / UA159)).